The following is a 104-amino-acid chain: L-rhamnose mutarotase (104 aa).

Residue Tyr-18 coordinates substrate. His-22 functions as the Proton donor in the catalytic mechanism. Substrate is bound by residues Tyr-41 and 76 to 77 (WW).

It belongs to the rhamnose mutarotase family. In terms of assembly, homodimer.

Its subcellular location is the cytoplasm. It catalyses the reaction alpha-L-rhamnose = beta-L-rhamnose. Its pathway is carbohydrate metabolism; L-rhamnose metabolism. Its function is as follows. Involved in the anomeric conversion of L-rhamnose. The chain is L-rhamnose mutarotase from Burkholderia cenocepacia (strain HI2424).